The following is a 372-amino-acid chain: Putative glutamate--cysteine ligase 2 (372 aa).

It belongs to the glutamate--cysteine ligase type 2 family. YbdK subfamily.

The enzyme catalyses L-cysteine + L-glutamate + ATP = gamma-L-glutamyl-L-cysteine + ADP + phosphate + H(+). In terms of biological role, ATP-dependent carboxylate-amine ligase which exhibits weak glutamate--cysteine ligase activity. In Rhodopirellula baltica (strain DSM 10527 / NCIMB 13988 / SH1), this protein is Putative glutamate--cysteine ligase 2.